Here is a 526-residue protein sequence, read N- to C-terminus: Glutamate--tRNA ligase, mitochondrial (526 aa).

A mitochondrion-targeting transit peptide spans 1 to 38 (MLSYTSCAKLICSRYIVSKISFYSLKRCNSTAVVRTRF). An L-glutamate-binding site is contributed by 37-39 (RFA). Residues 42-50 (PTGFLHLGS) carry the 'HIGH' region motif. Residue His-47 coordinates ATP. L-glutamate contacts are provided by residues Glu-73, 222–226 (YHFAN), and Arg-240. Residues Glu-243 and 278–282 (KLSKR) each bind ATP. The short motif at 278–282 (KLSKR) is the 'KMSKS' region element.

This sequence belongs to the class-I aminoacyl-tRNA synthetase family. Glutamate--tRNA ligase type 1 subfamily.

It localises to the mitochondrion. It carries out the reaction tRNA(Glu) + L-glutamate + ATP = L-glutamyl-tRNA(Glu) + AMP + diphosphate. Catalyzes the attachment of glutamate to tRNA(Glu) in a two-step reaction: glutamate is first activated by ATP to form Glu-AMP and then transferred to the acceptor end of tRNA(Glu). In Schizosaccharomyces pombe (strain 972 / ATCC 24843) (Fission yeast), this protein is Glutamate--tRNA ligase, mitochondrial (mse1).